Reading from the N-terminus, the 154-residue chain is Myoglobin (154 aa).

One can recognise a Globin domain in the interval Gly2–Lys148. Ser4 is modified (phosphoserine). His65 contributes to the nitrite binding site. Residue His65 coordinates O2. At Thr68 the chain carries Phosphothreonine. Residue His94 coordinates heme b.

The protein belongs to the globin family. In terms of assembly, monomeric.

Its subcellular location is the cytoplasm. It is found in the sarcoplasm. It catalyses the reaction Fe(III)-heme b-[protein] + nitric oxide + H2O = Fe(II)-heme b-[protein] + nitrite + 2 H(+). The catalysed reaction is H2O2 + AH2 = A + 2 H2O. Monomeric heme protein which primary function is to store oxygen and facilitate its diffusion within muscle tissues. Reversibly binds oxygen through a pentacoordinated heme iron and enables its timely and efficient release as needed during periods of heightened demand. Depending on the oxidative conditions of tissues and cells, and in addition to its ability to bind oxygen, it also has a nitrite reductase activity whereby it regulates the production of bioactive nitric oxide. Under stress conditions, like hypoxia and anoxia, it also protects cells against reactive oxygen species thanks to its pseudoperoxidase activity. The polypeptide is Myoglobin (MB) (Castor fiber (Eurasian beaver)).